The following is a 1138-amino-acid chain: Protein RECOGNITION OF PERONOSPORA PARASITICA 7 (1138 aa).

The NB-ARC domain occupies 166 to 422; it reads EENVKKLVGY…CNYVLSLSFE (257 aa). Position 189 to 196 (189 to 196) interacts with ATP; that stretch reads GMGGLGKT. 19 LRR repeats span residues 544–565, 566–581, 582–606, 607–631, 655–680, 681–705, 707–726, 727–752, 754–774, 775–797, 798–825, 847–871, 873–893, 894–918, 940–963, 1028–1050, 1055–1078, 1079–1103, and 1115–1138; these read QYPT…SLVV, VTLG…FTRL, ELLR…IGKL, IHLR…NLKL, MQEL…NLVK, LETL…RLRT, TIEL…IGGL, KYLE…VFDF, HLKR…QHFP, SHLT…ILEK, LLQL…GFPQ, MPLL…HLPS, LTAI…LERL, VHLK…GFPQ, MPRL…GFPQ, LEKL…RMVC, FPQL…QGSM, PLLH…RFIY, and KKRL…EFDD.

Belongs to the disease resistance NB-LRR family.

In terms of biological role, disease resistance protein required for incompatible interactions with avirulent strains of Hyaloperonospora arabidopsidis (downy mildew), isolate Hpa-Hiks1 in cv. Columbia. This is Protein RECOGNITION OF PERONOSPORA PARASITICA 7 from Arabidopsis thaliana (Mouse-ear cress).